A 235-amino-acid polypeptide reads, in one-letter code: Octanoyltransferase LIP2, mitochondrial (235 aa).

A mitochondrion-targeting transit peptide spans 1 to 32; sequence MRSPRTLEVWKLGTVNYLKSLKLQEKLVSERK. One can recognise a BPL/LPL catalytic domain in the interval 34–218; that stretch reads HQIPDTLLSL…CLAKAFSYDD (185 aa). Substrate contacts are provided by residues 79 to 86, 147 to 149, and 160 to 162; these read RGGDITFH, AIG, and GLA. Residue Cys-178 is the Acyl-thioester intermediate of the active site.

Belongs to the LipB family. Expressed in leaves. Expressed in roots, rosette leaves, cauline leaves, stems and siliques.

It localises to the mitochondrion. The catalysed reaction is octanoyl-[ACP] + L-lysyl-[protein] = N(6)-octanoyl-L-lysyl-[protein] + holo-[ACP] + H(+). It functions in the pathway protein modification; protein lipoylation via endogenous pathway; protein N(6)-(lipoyl)lysine from octanoyl-[acyl-carrier-protein]: step 1/2. Its function is as follows. Catalyzes the transfer of endogenously produced octanoic acid from octanoyl-acyl-carrier-protein onto the lipoyl domains of lipoate-dependent enzymes. Lipoyl-ACP can also act as a substrate although octanoyl-ACP is likely to be the physiological substrate. Together with LIP1 is essential for mitochondrial protein lipoylation during seed development. Required for the lipoylation of mitochondrial 2-oxoglutarate dehydrogenase component E2 proteins in leaves and roots. The protein is Octanoyltransferase LIP2, mitochondrial of Arabidopsis thaliana (Mouse-ear cress).